The sequence spans 197 residues: Phosphoheptose isomerase (197 aa).

One can recognise an SIS domain in the interval 34 to 196 (MVHCLLGGNK…DRTLFPQDEQ (163 aa)). Position 49–51 (49–51 (NGG)) interacts with substrate. Zn(2+) is bound by residues His58 and Glu62. Substrate-binding positions include Glu62, 91–92 (ND), 117–119 (STS), Ser122, and Gln172. The Zn(2+) site is built by Gln172 and His180.

This sequence belongs to the SIS family. GmhA subfamily. In terms of assembly, homotetramer. It depends on Zn(2+) as a cofactor.

The protein resides in the cytoplasm. It carries out the reaction 2 D-sedoheptulose 7-phosphate = D-glycero-alpha-D-manno-heptose 7-phosphate + D-glycero-beta-D-manno-heptose 7-phosphate. It functions in the pathway carbohydrate biosynthesis; D-glycero-D-manno-heptose 7-phosphate biosynthesis; D-glycero-alpha-D-manno-heptose 7-phosphate and D-glycero-beta-D-manno-heptose 7-phosphate from sedoheptulose 7-phosphate: step 1/1. Catalyzes the isomerization of sedoheptulose 7-phosphate in D-glycero-D-manno-heptose 7-phosphate. The polypeptide is Phosphoheptose isomerase (Shewanella sediminis (strain HAW-EB3)).